Here is a 150-residue protein sequence, read N- to C-terminus: Ribonuclease K6 (150 aa).

Positions 1–23 (MVLCFPLLLLLLVLWGPVCPLHA) are cleaved as a signal peptide. The active-site Proton acceptor is His-38. Intrachain disulfides connect Cys-46–Cys-104, Cys-60–Cys-114, Cys-78–Cys-129, and Cys-85–Cys-92. Asn-55 is a glycosylation site (N-linked (GlcNAc...) asparagine). Substrate-binding positions include 61–65 (KHQNT) and Lys-86. A glycan (N-linked (GlcNAc...) asparagine) is linked at Asn-100. Arg-105 contacts substrate. The active-site Proton donor is His-145.

Belongs to the pancreatic ribonuclease family. As to quaternary structure, interacts (via N-terminus) with bacterial lipopolysaccharide (LPS).

It is found in the secreted. The protein resides in the lysosome. The protein localises to the cytoplasmic granule. Functionally, ribonuclease which shows a preference for the pyrimidines uridine and cytosine. Has potent antibacterial activity against a range of Gram-positive and Gram-negative bacteria, including P.aeruginosa, A.baumanii, M.luteus, S.aureus, E.faecalis, E.faecium, S.saprophyticus and E.coli. Causes loss of bacterial membrane integrity, and also promotes agglutination of Gram-negative bacteria. Probably contributes to urinary tract sterility. Bactericidal activity is independent of RNase activity. This Pongo pygmaeus (Bornean orangutan) protein is Ribonuclease K6 (RNASE6).